The sequence spans 46 residues: Apamin (46 aa).

The N-terminal stretch at 1-27 (MISMLRCISLFLSVILITGYFVTPVMS) is a signal peptide. Intrachain disulfides connect cysteine 28–cysteine 38 and cysteine 30–cysteine 42. Residues 40–41 (RR) form an essential for toxin activity region. Histidine 45 carries the post-translational modification Histidine amide.

Expressed by the venom gland.

It is found in the secreted. Neurotoxin that blocks voltage-independent calcium-activated potassium channels (KCNN1=SK1, KCNN2=SK2, KCNN3=SK3). This chain is Apamin, found in Apis cerana cerana (Oriental honeybee).